A 496-amino-acid polypeptide reads, in one-letter code: Lysine--tRNA ligase (496 aa).

Mg(2+) is bound by residues glutamate 409 and glutamate 416.

Belongs to the class-II aminoacyl-tRNA synthetase family. Homodimer. It depends on Mg(2+) as a cofactor.

The protein resides in the cytoplasm. It carries out the reaction tRNA(Lys) + L-lysine + ATP = L-lysyl-tRNA(Lys) + AMP + diphosphate. The chain is Lysine--tRNA ligase from Streptococcus sanguinis (strain SK36).